The sequence spans 83 residues: Mu-theraphotoxin-Hhn2c (83 aa).

The first 21 residues, 1 to 21, serve as a signal peptide directing secretion; that stretch reads MKASMFLALAGLVLLFVVGYA. A propeptide spanning residues 22-48 is cleaved from the precursor; it reads SESEEKEFPIELLSKIFAVDVFKGEER. 3 disulfides stabilise this stretch: Cys-50–Cys-65, Cys-57–Cys-70, and Cys-64–Cys-77. Residue Leu-81 is modified to Leucine amide.

The protein belongs to the neurotoxin 10 (Hwtx-1) family. 15 (Hntx-3) subfamily. Monomer. As to expression, expressed by the venom gland.

The protein localises to the secreted. In terms of biological role, lethal neurotoxin. Selectively blocks tetrodotoxin-sensitive voltage-gated sodium channels (Nav). Does not affect tetrodotoxin-resistant voltage-gated sodium channels or calcium channels. This is Mu-theraphotoxin-Hhn2c from Cyriopagopus hainanus (Chinese bird spider).